Here is a 350-residue protein sequence, read N- to C-terminus: Biotin synthase (350 aa).

In terms of domain architecture, Radical SAM core spans 54–278; it reads REIQLSTLLS…TMPQSYVRLS (225 aa). [4Fe-4S] cluster contacts are provided by cysteine 69, cysteine 73, and cysteine 76. [2Fe-2S] cluster is bound by residues cysteine 113, cysteine 144, cysteine 204, and arginine 276.

Belongs to the radical SAM superfamily. Biotin synthase family. Homodimer. [4Fe-4S] cluster serves as cofactor. It depends on [2Fe-2S] cluster as a cofactor.

It carries out the reaction (4R,5S)-dethiobiotin + (sulfur carrier)-SH + 2 reduced [2Fe-2S]-[ferredoxin] + 2 S-adenosyl-L-methionine = (sulfur carrier)-H + biotin + 2 5'-deoxyadenosine + 2 L-methionine + 2 oxidized [2Fe-2S]-[ferredoxin]. It participates in cofactor biosynthesis; biotin biosynthesis; biotin from 7,8-diaminononanoate: step 2/2. In terms of biological role, catalyzes the conversion of dethiobiotin (DTB) to biotin by the insertion of a sulfur atom into dethiobiotin via a radical-based mechanism. This is Biotin synthase from Neisseria meningitidis serogroup C / serotype 2a (strain ATCC 700532 / DSM 15464 / FAM18).